A 262-amino-acid polypeptide reads, in one-letter code: 4-hydroxy-2-oxo-heptane-1,7-dioate aldolase (262 aa).

H45 serves as the catalytic Proton acceptor. Substrate is bound at residue Q147. E149 contributes to the a divalent metal cation binding site. The substrate site is built by A174 and D175. D175 is a binding site for a divalent metal cation.

This sequence belongs to the HpcH/HpaI aldolase family. Homohexamer; trimer of dimers. A divalent metal cation serves as cofactor.

It catalyses the reaction 4-hydroxy-2-oxoheptanedioate = succinate semialdehyde + pyruvate. It functions in the pathway aromatic compound metabolism; 4-hydroxyphenylacetate degradation; pyruvate and succinate semialdehyde from 4-hydroxyphenylacetate: step 7/7. Catalyzes the reversible retro-aldol cleavage of 4-hydroxy-2-ketoheptane-1,7-dioate (HKHD) to pyruvate and succinic semialdehyde. In Shigella boydii serotype 18 (strain CDC 3083-94 / BS512), this protein is 4-hydroxy-2-oxo-heptane-1,7-dioate aldolase.